The chain runs to 668 residues: Packaging protein UL32 homolog (668 aa).

The span at 1–10 (MNPSTHVSSN) shows a compositional bias: polar residues. The disordered stretch occupies residues 1 to 35 (MNPSTHVSSNGPTTPPHGPHTTFLPPTSPAPSTSS). A compositionally biased stretch (low complexity) spans 19–35 (PHTTFLPPTSPAPSTSS). Zn(2+) is bound by residues Cys-200, Cys-203, His-276, and Cys-282. The tract at residues 200–282 (CNLCAIISIC…FHLHFFINRC (83 aa)) is zinc finger 1. 2 stretches are compositionally biased toward basic and acidic residues: residues 392–401 (SEREDARMMM) and 410–419 (GEKGGDDPGR). Residues 392-430 (SEREDARMMMEEEEDEEGGEKGGDDPGRHNGGGTSGGFS) form a disordered region. 4 residues coordinate Zn(2+): Cys-459, Cys-462, His-567, and Cys-574. The zinc finger 2 stretch occupies residues 459–574 (CLLCELMACS…YKHFFCDPQC (116 aa)).

This sequence belongs to the herpesviridae UL32 protein family.

It is found in the host cytoplasm. It localises to the host nucleus. In terms of biological role, plays a role in efficient localization of neo-synthesized capsids to nuclear replication compartments, thereby controlling cleavage and packaging of virus genomic DNA. This chain is Packaging protein UL32 homolog (UL52), found in Homo sapiens (Human).